The sequence spans 469 residues: 1-aminocyclopropane-1-carboxylate synthase 3 (469 aa).

Lys-272 is modified (N6-(pyridoxal phosphate)lysine). Residues 432-452 (APNATNHQNQQQSNANSKKKS) are disordered. Residues 437 to 447 (NHQNQQQSNAN) are compositionally biased toward low complexity.

It belongs to the class-I pyridoxal-phosphate-dependent aminotransferase family. Homodimer. The cofactor is pyridoxal 5'-phosphate.

The catalysed reaction is S-adenosyl-L-methionine = 1-aminocyclopropane-1-carboxylate + S-methyl-5'-thioadenosine + H(+). Its pathway is alkene biosynthesis; ethylene biosynthesis via S-adenosyl-L-methionine; ethylene from S-adenosyl-L-methionine: step 1/2. Its function is as follows. Catalyzes the formation of 1-aminocyclopropane-1-carboxylate, a direct precursor of ethylene in higher plants. The protein is 1-aminocyclopropane-1-carboxylate synthase 3 (ACS3) of Solanum lycopersicum (Tomato).